The following is a 141-amino-acid chain: Large ribosomal subunit protein uL11 (141 aa).

This sequence belongs to the universal ribosomal protein uL11 family. As to quaternary structure, part of the ribosomal stalk of the 50S ribosomal subunit. Interacts with L10 and the large rRNA to form the base of the stalk. L10 forms an elongated spine to which L12 dimers bind in a sequential fashion forming a multimeric L10(L12)X complex. One or more lysine residues are methylated.

Its function is as follows. Forms part of the ribosomal stalk which helps the ribosome interact with GTP-bound translation factors. The protein is Large ribosomal subunit protein uL11 of Clostridium tetani (strain Massachusetts / E88).